Reading from the N-terminus, the 550-residue chain is Cell pattern formation-associated protein STUA (550 aa).

Residues 86–192 (RVTATLWEDE…HNIGALLYHP (107 aa)) form the HTH APSES-type domain. The segment at residues 120–141 (GTKLLNVAGMTRGRRDGILKSE) is a DNA-binding region (H-T-H motif). Residues 246 to 266 (SLANGPQSLASTPQPLTNGSQ) are compositionally biased toward polar residues. Disordered regions lie at residues 246–277 (SLAN…GMLK), 371–412 (HHQP…VKRR), 447–467 (KRRD…DHLN), and 527–550 (APVY…QSFG). Over residues 385–395 (RGRDEDDDVHR) the composition is skewed to basic and acidic residues. The interval 517-546 (TVAASPSYPSAPVYDTGARPPSAISAPRRQ) is nuclear localization domain.

Belongs to the EFG1/PHD1/stuA family.

The protein resides in the nucleus. Transcription factor that regulates asexual reproduction. Binds the StuA-response elements (StRE) with the consensus sequence 5'-(A/T)CGCG(T/A)N(A/C)-3' at the promoters of target genes. Differentially regulates the development of macroconidia, microconidia, and chlamydospores. Acts as a positive regulator for the development of macroconidia and as a negative regulator for the development of chlamydospores. Involved in microconidium formation specifically in infected plants. This is Cell pattern formation-associated protein STUA from Fusarium oxysporum (Fusarium vascular wilt).